The following is a 617-amino-acid chain: Proline--tRNA ligase (617 aa).

The protein belongs to the class-II aminoacyl-tRNA synthetase family. ProS type 1 subfamily. Homodimer.

The protein resides in the cytoplasm. It catalyses the reaction tRNA(Pro) + L-proline + ATP = L-prolyl-tRNA(Pro) + AMP + diphosphate. Functionally, catalyzes the attachment of proline to tRNA(Pro) in a two-step reaction: proline is first activated by ATP to form Pro-AMP and then transferred to the acceptor end of tRNA(Pro). As ProRS can inadvertently accommodate and process non-cognate amino acids such as alanine and cysteine, to avoid such errors it has two additional distinct editing activities against alanine. One activity is designated as 'pretransfer' editing and involves the tRNA(Pro)-independent hydrolysis of activated Ala-AMP. The other activity is designated 'posttransfer' editing and involves deacylation of mischarged Ala-tRNA(Pro). The misacylated Cys-tRNA(Pro) is not edited by ProRS. This chain is Proline--tRNA ligase, found in Streptococcus agalactiae serotype V (strain ATCC BAA-611 / 2603 V/R).